Here is a 1719-residue protein sequence, read N- to C-terminus: Chromodomain-helicase-DNA-binding protein 1 (1719 aa).

The span at 1-10 shows a compositional bias: basic and acidic residues; sequence MNGHSDEESV. Residues 1–249 are disordered; sequence MNGHSDEESV…EAEETKTDSD (249 aa). Low complexity predominate over residues 34-62; that stretch reads SSGSSSDGSSSQSGSSDSESGSESGSQSE. A compositionally biased stretch (basic and acidic residues) spans 66-85; it reads DTSREKKQVQAKPPKADGSE. Residues 103–116 show a composition bias toward low complexity; the sequence is KKQQQQQKAASSDS. The span at 117-133 shows a compositional bias: acidic residues; sequence GSEEDSSSSEDSADDSS. Over residues 149–160 the composition is skewed to low complexity; sequence SGSGSVSGTGSD. The span at 161 to 178 shows a compositional bias: acidic residues; that stretch reads SESEEDGDKSSCEESESD. A compositionally biased stretch (basic residues) spans 184 to 207; the sequence is KVKSRKPPSRIKPKSGKKSTGQKK. Over residues 212–222 the composition is skewed to acidic residues; the sequence is SSEEEEDDDED. Over residues 239–248 the composition is skewed to basic and acidic residues; it reads KEAEETKTDS. Chromo domains follow at residues 268–360 and 385–448; these read ETIE…RWLK and QIVE…TPFK. A Helicase ATP-binding domain is found at 489–659; that stretch reads AHSWCKGNSC…WSLLHFIMPE (171 aa). 502 to 509 provides a ligand contact to ATP; that stretch reads DEMGLGKT. The short motif at 610–613 is the DEAH box element; that stretch reads DEAH. The 152-residue stretch at 788–939 folds into the Helicase C-terminal domain; sequence LLDKLLIRLR…HLVIQRMDTT (152 aa). 3 disordered regions span residues 1076 to 1116, 1319 to 1393, and 1503 to 1719; these read ISFN…TIPR, QRLA…TPVH, and KKRQ…SRKT. Composition is skewed to basic residues over residues 1103-1113 and 1327-1342; these read KRPKKRGRPRT and SKRR…MKAS. Basic and acidic residues predominate over residues 1369 to 1380; sequence NKVNEIKSENKE. A CHD1 helical C-terminal domain (CHCT) region spans residues 1410-1512; sequence LDQKTFSVCK…KKRQESQQHN (103 aa). The span at 1511–1524 shows a compositional bias: polar residues; it reads HNDQNISSNVNTHV. 3 stretches are compositionally biased toward basic and acidic residues: residues 1526–1576, 1585–1673, and 1698–1710; these read RNPD…DSRK, GKDH…DHRA, and SPFE…KSTP.

Belongs to the SNF2/RAD54 helicase family. In terms of assembly, component of the SAGA complex. Interacts with SSRP1.

It localises to the nucleus. The protein resides in the chromosome. Its subcellular location is the centromere. It catalyses the reaction ATP + H2O = ADP + phosphate + H(+). Functionally, ATP-dependent chromatin-remodeling factor which functions as substrate recognition component of the transcription regulatory histone acetylation (HAT) complex SAGA. Regulates polymerase II transcription. Also required for efficient transcription by RNA polymerase I, and more specifically the polymerase I transcription termination step. Regulates negatively DNA replication. Not only involved in transcription-related chromatin remodeling, but also required to maintain a specific chromatin configuration across the genome. Required for maintaining open chromatin and pluripotency in embryonic stem cells. Required for centromeric localization of CENPA. In Gallus gallus (Chicken), this protein is Chromodomain-helicase-DNA-binding protein 1 (CHD1).